Here is a 192-residue protein sequence, read N- to C-terminus: MMMMMMRSTCNLTLMLCICALVVASMAAEGPRDFKVGDEFGWRVPLQNDSAVYSHWASSNRFHIGDSLSFVYDKDSVMEVDKWGFYHCNGSDPITAFDNGNSTFDLDRPGLFYFISGSNQHCTSGQRLIVEVMHIHQHHDHDASMPPSMSPLSNSASPYASASASSAASSLPTACLLIPLFLTIASFRFISY.

A signal peptide spans 1 to 27; sequence MMMMMMRSTCNLTLMLCICALVVASMA. The Phytocyanin domain occupies 32–134; it reads RDFKVGDEFG…GQRLIVEVMH (103 aa). N-linked (GlcNAc...) asparagine glycans are attached at residues asparagine 48, asparagine 89, and asparagine 101. Cysteine 88 and cysteine 122 are disulfide-bonded. The GPI-anchor amidated serine moiety is linked to residue serine 166. The propeptide at 167 to 192 is removed in mature form; it reads AASSLPTACLLIPLFLTIASFRFISY.

Belongs to the early nodulin-like (ENODL) family. Mostly expressed in flowers, and, to a lower extent, in seeds, but barely in seedlings, stems, leaves and roots.

Its subcellular location is the cell membrane. May act as a carbohydrate transporter. The chain is Early nodulin-like protein 7 from Arabidopsis thaliana (Mouse-ear cress).